The chain runs to 640 residues: Conserved oligomeric Golgi complex subunit 8 (640 aa).

The segment at 580 to 640 (LVAPAPELPA…VPCPQPGEQP (61 aa)) is disordered.

Belongs to the COG8 family. Component of the conserved oligomeric Golgi complex which is composed of eight different subunits and is required for normal Golgi morphology and localization.

It localises to the golgi apparatus membrane. Its function is as follows. Required for normal Golgi function. This Mus musculus (Mouse) protein is Conserved oligomeric Golgi complex subunit 8 (Cog8).